The following is a 489-amino-acid chain: DNA-directed RNA polymerase subunit beta' C-terminal section (489 aa).

The Mg(2+) site is built by aspartate 208, aspartate 210, and aspartate 212.

It belongs to the RNA polymerase beta' chain family. RpoC1 subfamily. In plastids the minimal PEP RNA polymerase catalytic core is composed of four subunits: alpha, beta, beta', and beta''. When a (nuclear-encoded) sigma factor is associated with the core the holoenzyme is formed, which can initiate transcription. Requires Mg(2+) as cofactor.

Its subcellular location is the plastid. It is found in the chloroplast. It carries out the reaction RNA(n) + a ribonucleoside 5'-triphosphate = RNA(n+1) + diphosphate. DNA-dependent RNA polymerase catalyzes the transcription of DNA into RNA using the four ribonucleoside triphosphates as substrates. This chain is DNA-directed RNA polymerase subunit beta' C-terminal section (rpoC1B), found in Chlamydomonas reinhardtii (Chlamydomonas smithii).